The sequence spans 247 residues: MWPLLTMHITQLNRECLLHLFSFLDKDSRKSLARTCSQLHDVFEDPALWSLLHFRSLTELQKDNFLLGPALRSLSICWHSSRVQVCSIEDWLKSAFQRSICSRHESLVNDFLLRVCDRLSAVRSPRRREAPAPSSGTPIAVGPKSPRWGGPDHSEFADLRSGVTGARAAARRGLGSLRAERPSETPPAPGVSWGPPPPGAPVVISVKQEEGKQGRTGRRSHRAAPPCGFARTRVCPPTFPGADAFPQ.

One can recognise an F-box domain in the interval 6–52 (TMHITQLNRECLLHLFSFLDKDSRKSLARTCSQLHDVFEDPALWSLL). Disordered stretches follow at residues 124–154 (SPRRREAPAPSSGTPIAVGPKSPRWGGPDHS) and 173–247 (GLGS…AFPQ). Residues 184–200 (ETPPAPGVSWGPPPPGA) show a composition bias toward pro residues.

As to quaternary structure, directly interacts with SKP1 and CUL1. As to expression, enriched in cardiac muscle.

Its subcellular location is the cytoplasm. It is found in the myofibril. The protein resides in the sarcomere. The protein localises to the z line. It functions in the pathway protein modification; protein ubiquitination. In terms of biological role, substrate-recognition component of the SCF (SKP1-CUL1-F-box protein)-type E3 ubiquitin ligase complex. Promotes ubiquitination of sarcomeric proteins alpha-actinin-2 (ACTN2) and filamin-C (FLNC). The chain is F-box and leucine-rich protein 22 (FBXL22) from Homo sapiens (Human).